A 617-amino-acid polypeptide reads, in one-letter code: UvrABC system protein C (617 aa).

The region spanning 12-91 (EKPGVYLMKD…IKKYKPKYNV (80 aa)) is the GIY-YIG domain. The UVR domain occupies 203 to 238 (EWLVEKLKEEMQKAADELRFEEAARLRDQIFAIEKI).

It belongs to the UvrC family. Interacts with UvrB in an incision complex.

The protein localises to the cytoplasm. Functionally, the UvrABC repair system catalyzes the recognition and processing of DNA lesions. UvrC both incises the 5' and 3' sides of the lesion. The N-terminal half is responsible for the 3' incision and the C-terminal half is responsible for the 5' incision. The sequence is that of UvrABC system protein C from Caldanaerobacter subterraneus subsp. tengcongensis (strain DSM 15242 / JCM 11007 / NBRC 100824 / MB4) (Thermoanaerobacter tengcongensis).